We begin with the raw amino-acid sequence, 626 residues long: DNA mismatch repair protein MutL (626 aa).

The protein belongs to the DNA mismatch repair MutL/HexB family.

In terms of biological role, this protein is involved in the repair of mismatches in DNA. It is required for dam-dependent methyl-directed DNA mismatch repair. May act as a 'molecular matchmaker', a protein that promotes the formation of a stable complex between two or more DNA-binding proteins in an ATP-dependent manner without itself being part of a final effector complex. The sequence is that of DNA mismatch repair protein MutL from Pelodictyon phaeoclathratiforme (strain DSM 5477 / BU-1).